The following is a 154-amino-acid chain: Myoglobin (154 aa).

Residues Met-1–Ala-147 enclose the Globin domain. His-96 is a heme b binding site.

This sequence belongs to the globin family.

The protein localises to the cytoplasm. This is Myoglobin (GLBB) from Nippostrongylus brasiliensis (Rat hookworm).